Here is a 450-residue protein sequence, read N- to C-terminus: 3-phosphoshikimate 1-carboxyvinyltransferase (450 aa).

3-phosphoshikimate contacts are provided by Lys28, Ser29, and Arg33. Lys28 is a binding site for phosphoenolpyruvate. Residues Gly100 and Arg128 each contribute to the phosphoenolpyruvate site. The 3-phosphoshikimate site is built by Ser173, Gln175, Asp326, and Lys353. Gln175 lines the phosphoenolpyruvate pocket. Residue Asp326 is the Proton acceptor of the active site. Arg357 and Arg402 together coordinate phosphoenolpyruvate.

The protein belongs to the EPSP synthase family. As to quaternary structure, monomer.

It is found in the cytoplasm. It carries out the reaction 3-phosphoshikimate + phosphoenolpyruvate = 5-O-(1-carboxyvinyl)-3-phosphoshikimate + phosphate. It participates in metabolic intermediate biosynthesis; chorismate biosynthesis; chorismate from D-erythrose 4-phosphate and phosphoenolpyruvate: step 6/7. Catalyzes the transfer of the enolpyruvyl moiety of phosphoenolpyruvate (PEP) to the 5-hydroxyl of shikimate-3-phosphate (S3P) to produce enolpyruvyl shikimate-3-phosphate and inorganic phosphate. The sequence is that of 3-phosphoshikimate 1-carboxyvinyltransferase from Brucella abortus biovar 1 (strain 9-941).